A 347-amino-acid chain; its full sequence is NADH-ubiquinone oxidoreductase chain 2 (347 aa).

10 helical membrane-spanning segments follow: residues 3 to 23 (PMIF…VMMS), 25 to 45 (HWFM…PVLM), 59 to 79 (YFLT…INLM), 96 to 116 (MLIT…FWVP), 122 to 142 (IPLS…LSLL), 149 to 169 (INME…GWGG), 201 to 221 (SFLN…LLIF), 239 to 259 (IIAT…PLTG), 274 to 294 (NSTI…FFYI), and 326 to 346 (ILPL…FLML).

It belongs to the complex I subunit 2 family. As to quaternary structure, core subunit of respiratory chain NADH dehydrogenase (Complex I) which is composed of 45 different subunits. Interacts with TMEM242.

The protein localises to the mitochondrion inner membrane. The enzyme catalyses a ubiquinone + NADH + 5 H(+)(in) = a ubiquinol + NAD(+) + 4 H(+)(out). Core subunit of the mitochondrial membrane respiratory chain NADH dehydrogenase (Complex I) that is believed to belong to the minimal assembly required for catalysis. Complex I functions in the transfer of electrons from NADH to the respiratory chain. The immediate electron acceptor for the enzyme is believed to be ubiquinone. The chain is NADH-ubiquinone oxidoreductase chain 2 from Crocidura hildegardeae (Hildegarde's shrew).